The chain runs to 615 residues: Protein translocase subunit SecD (615 aa).

Helical transmembrane passes span Y10–G30, Q452–Y472, L477–L497, M504–I524, Y546–Y568, and G585–Y605.

The protein belongs to the SecD/SecF family. SecD subfamily. In terms of assembly, forms a complex with SecF. Part of the essential Sec protein translocation apparatus which comprises SecA, SecYEG and auxiliary proteins SecDF-YajC and YidC.

The protein localises to the cell inner membrane. Its function is as follows. Part of the Sec protein translocase complex. Interacts with the SecYEG preprotein conducting channel. SecDF uses the proton motive force (PMF) to complete protein translocation after the ATP-dependent function of SecA. The polypeptide is Protein translocase subunit SecD (Salmonella choleraesuis (strain SC-B67)).